The primary structure comprises 211 residues: Pyridoxine/pyridoxamine 5'-phosphate oxidase (211 aa).

Residues 7–10 (RREY) and Lys65 each bind substrate. FMN is bound by residues 60 to 65 (RTVLLK), 75 to 76 (YT), Arg81, Lys82, and Gln104. The substrate site is built by Tyr122, Arg126, and Ser130. FMN is bound by residues 139-140 (QS) and Trp184. 190–192 (RLH) contacts substrate. Arg194 serves as a coordination point for FMN.

Belongs to the pyridoxamine 5'-phosphate oxidase family. In terms of assembly, homodimer. The cofactor is FMN.

It carries out the reaction pyridoxamine 5'-phosphate + O2 + H2O = pyridoxal 5'-phosphate + H2O2 + NH4(+). The enzyme catalyses pyridoxine 5'-phosphate + O2 = pyridoxal 5'-phosphate + H2O2. It functions in the pathway cofactor metabolism; pyridoxal 5'-phosphate salvage; pyridoxal 5'-phosphate from pyridoxamine 5'-phosphate: step 1/1. The protein operates within cofactor metabolism; pyridoxal 5'-phosphate salvage; pyridoxal 5'-phosphate from pyridoxine 5'-phosphate: step 1/1. Functionally, catalyzes the oxidation of either pyridoxine 5'-phosphate (PNP) or pyridoxamine 5'-phosphate (PMP) into pyridoxal 5'-phosphate (PLP). The sequence is that of Pyridoxine/pyridoxamine 5'-phosphate oxidase from Aeromonas hydrophila subsp. hydrophila (strain ATCC 7966 / DSM 30187 / BCRC 13018 / CCUG 14551 / JCM 1027 / KCTC 2358 / NCIMB 9240 / NCTC 8049).